A 1693-amino-acid chain; its full sequence is Latrophilin Cirl (1693 aa).

Over 1–753 (MLPTILSISY…LFTMFDGNMR (753 aa)) the chain is Extracellular. The 90-residue stretch at 25-114 (ACEGKKLTIE…KYLEAHYQCI (90 aa)) folds into the SUEL-type lectin domain. Asn-142 carries an N-linked (GlcNAc...) asparagine glycan. Composition is skewed to polar residues over residues 185–198 (TAVTHSTPWSSTTA) and 256–265 (NVTSPSNTRI). The tract at residues 185 to 299 (TAVTHSTPWS…PGTAASGSVA (115 aa)) is disordered. Asn-256 is a glycosylation site (N-linked (GlcNAc...) asparagine). Low complexity predominate over residues 275–299 (DDGTLLTTKSSPNRPPGTAASGSVA). N-linked (GlcNAc...) asparagine glycans are attached at residues Asn-301, Asn-340, Asn-397, Asn-641, Asn-689, and Asn-716. The segment at 375-399 (YDEYDDDASSTTPAPSGGDCLHNSS) is disordered. The GAIN-B domain occupies 564 to 740 (KKSKIYSSVV…AILMDVVDEH (177 aa)). 2 disulfide bridges follow: Cys-695-Cys-722 and Cys-710-Cys-724. The GPS stretch occupies residues 695–740 (CVFWNYIDHAWSANGCSLESTNRTHSVCSCNHLTNFAILMDVVDEH). The chain crosses the membrane as a helical span at residues 754–774 (IFIYISIGICVVFIVIALLTL). Residues 775–787 (KLFNGVFVKSART) lie on the Cytoplasmic side of the membrane. The chain crosses the membrane as a helical span at residues 788–808 (SIYTSIYLCLLAIELLFLLGI). At 809-814 (EQTETS) the chain is on the extracellular side. The helical transmembrane segment at 815 to 835 (IFCGFITIFLHCAILSGTAWF) threads the bilayer. The Cytoplasmic portion of the chain corresponds to 836 to 861 (CYEAFHSYSTLTSDELLLEVDQTPKV). A helical transmembrane segment spans residues 862–882 (NCYYLLSYGLSLSVVAISLVI). Topologically, residues 883–906 (DPSTYTQNDYCVLMEANALFYATF) are extracellular. Residues 907-927 (VVPVLVFFVAAIGYTFLSWII) form a helical membrane-spanning segment. At 928-954 (MCRKSRTGLKTKEHTRLASVRFDIRCS) the chain is on the cytoplasmic side. A helical transmembrane segment spans residues 955 to 975 (FVFLLLLSAVWCSAYFYLRGA). Topologically, residues 976–985 (KMDDDTADVY) are extracellular. Residues 986 to 1006 (GYCFICFNTLLGLYIFVFHCI) form a helical membrane-spanning segment. The Cytoplasmic portion of the chain corresponds to 1007–1693 (QNEKIRREYR…VRCYLEPLAK (687 aa)). Phosphoserine is present on Ser-1142. 5 disordered regions span residues 1156-1194 (HKQQQQQQQQGPLGESYYHQPDYYSWKQPSTGTGGLKTP), 1220-1247 (KPNSGQHGKKKRGAGGVPASPSGSLHSR), 1294-1319 (QQQLRRQQLHQQQQQLSSDEEQAEQH), 1433-1521 (GGGS…SDER), and 1601-1673 (LAVN…QQRH). Residues Ser-1239 and Ser-1246 each carry the phosphoserine modification. Residues 1294–1309 (QQQLRRQQLHQQQQQL) are compositionally biased toward low complexity. A phosphoserine mark is found at Ser-1310 and Ser-1311. A compositionally biased stretch (low complexity) spans 1439 to 1464 (GGSVSSRSQQQQLKKQQQQQSLAQQR). 2 stretches are compositionally biased toward acidic residues: residues 1472-1486 (DDDDDEDEEEDEEAT) and 1496-1507 (CDEDEEEDESDL). Over residues 1508–1521 (EHDAHGLPPQSDER) the composition is skewed to basic and acidic residues. A compositionally biased stretch (low complexity) spans 1630-1655 (LQKLSPQSTTSSSSHTSHSNPNLHPH). Residues 1656-1672 (QLTHPHPHQHPPHHQQR) are compositionally biased toward basic residues.

It belongs to the G-protein coupled receptor 2 family. LN-TM7 subfamily. In terms of assembly, forms a heterodimer, consisting of a large extracellular region non-covalently linked to a seven-transmembrane moiety. Proteolytically cleaved into 2 subunits, an extracellular subunit and a seven-transmembrane subunit.

It is found in the cell membrane. This chain is Latrophilin Cirl, found in Drosophila sechellia (Fruit fly).